A 266-amino-acid polypeptide reads, in one-letter code: 4-hydroxy-tetrahydrodipicolinate reductase (266 aa).

11–16 lines the NAD(+) pocket; sequence GALGKM. Residue Lys39 participates in NADP(+) binding. 100–102 is a binding site for NAD(+); that stretch reads GTT. The active-site Proton donor/acceptor is His156. Position 157 (His157) interacts with (S)-2,3,4,5-tetrahydrodipicolinate. The active-site Proton donor is Lys160. 166-167 lines the (S)-2,3,4,5-tetrahydrodipicolinate pocket; the sequence is GT.

Belongs to the DapB family.

It localises to the cytoplasm. It catalyses the reaction (S)-2,3,4,5-tetrahydrodipicolinate + NAD(+) + H2O = (2S,4S)-4-hydroxy-2,3,4,5-tetrahydrodipicolinate + NADH + H(+). The catalysed reaction is (S)-2,3,4,5-tetrahydrodipicolinate + NADP(+) + H2O = (2S,4S)-4-hydroxy-2,3,4,5-tetrahydrodipicolinate + NADPH + H(+). It functions in the pathway amino-acid biosynthesis; L-lysine biosynthesis via DAP pathway; (S)-tetrahydrodipicolinate from L-aspartate: step 4/4. Its function is as follows. Catalyzes the conversion of 4-hydroxy-tetrahydrodipicolinate (HTPA) to tetrahydrodipicolinate. The sequence is that of 4-hydroxy-tetrahydrodipicolinate reductase from Syntrophomonas wolfei subsp. wolfei (strain DSM 2245B / Goettingen).